A 340-amino-acid polypeptide reads, in one-letter code: Uroporphyrinogen decarboxylase (340 aa).

Residues 21–25, Phe-40, Asp-71, Tyr-147, Ser-202, and His-316 each bind substrate; that span reads RQAGR.

This sequence belongs to the uroporphyrinogen decarboxylase family. Homodimer.

It localises to the cytoplasm. It carries out the reaction uroporphyrinogen III + 4 H(+) = coproporphyrinogen III + 4 CO2. It functions in the pathway porphyrin-containing compound metabolism; protoporphyrin-IX biosynthesis; coproporphyrinogen-III from 5-aminolevulinate: step 4/4. Catalyzes the decarboxylation of four acetate groups of uroporphyrinogen-III to yield coproporphyrinogen-III. The chain is Uroporphyrinogen decarboxylase from Wolinella succinogenes (strain ATCC 29543 / DSM 1740 / CCUG 13145 / JCM 31913 / LMG 7466 / NCTC 11488 / FDC 602W) (Vibrio succinogenes).